A 282-amino-acid chain; its full sequence is Putative hydrolase Bcen_5340 (282 aa).

Mg(2+) is bound by residues glutamate 124, glutamate 126, and aspartate 155.

It belongs to the FAH family. The cofactor is Mg(2+).

This Burkholderia orbicola (strain AU 1054) protein is Putative hydrolase Bcen_5340.